The following is a 459-amino-acid chain: Cysteine--tRNA ligase (459 aa).

Zn(2+) is bound at residue Cys28. Residues 30-40 carry the 'HIGH' region motif; the sequence is ITVYDLCHVGH. Zn(2+) contacts are provided by Cys209, His234, and Glu238. Residues 266 to 270 carry the 'KMSKS' region motif; it reads KMSKS. Residue Lys269 coordinates ATP.

Belongs to the class-I aminoacyl-tRNA synthetase family. As to quaternary structure, monomer. The cofactor is Zn(2+).

It is found in the cytoplasm. The catalysed reaction is tRNA(Cys) + L-cysteine + ATP = L-cysteinyl-tRNA(Cys) + AMP + diphosphate. This chain is Cysteine--tRNA ligase (cysS), found in Pasteurella multocida (strain Pm70).